A 136-amino-acid chain; its full sequence is Probable S-adenosyl-L-methionine-binding protein PH1056 (136 aa).

A TsaA-like domain is found at 8–126 (IVPVGYIRKE…FPERYDCPKE (119 aa)). Residues 48 to 49 (HK), Arg78, and 106 to 109 (EDGT) contribute to the S-adenosyl-L-methionine site.

The protein belongs to the tRNA methyltransferase O family.

In Pyrococcus horikoshii (strain ATCC 700860 / DSM 12428 / JCM 9974 / NBRC 100139 / OT-3), this protein is Probable S-adenosyl-L-methionine-binding protein PH1056.